A 331-amino-acid chain; its full sequence is Small ribosomal subunit protein uS2 (331 aa).

This sequence belongs to the universal ribosomal protein uS2 family.

This chain is Small ribosomal subunit protein uS2, found in Rhodopseudomonas palustris (strain ATCC BAA-98 / CGA009).